A 464-amino-acid chain; its full sequence is Glutamate--tRNA ligase (464 aa).

The short motif at 11–21 (PSPTGYLHIGG) is the 'HIGH' region element. The short motif at 253-257 (KLSKR) is the 'KMSKS' region element. An ATP-binding site is contributed by K256.

This sequence belongs to the class-I aminoacyl-tRNA synthetase family. Glutamate--tRNA ligase type 1 subfamily. Monomer.

The protein localises to the cytoplasm. It catalyses the reaction tRNA(Glu) + L-glutamate + ATP = L-glutamyl-tRNA(Glu) + AMP + diphosphate. Its function is as follows. Catalyzes the attachment of glutamate to tRNA(Glu) in a two-step reaction: glutamate is first activated by ATP to form Glu-AMP and then transferred to the acceptor end of tRNA(Glu). This Metamycoplasma arthritidis (strain 158L3-1) (Mycoplasma arthritidis) protein is Glutamate--tRNA ligase.